Consider the following 38-residue polypeptide: Zinc-containing ferredoxin (38 aa).

The segment covering Gly-1–Pro-11 has biased composition (polar residues). Residues Gly-1 to Gly-38 are disordered. The interval Gly-1–Gly-38 is N-terminal extension. Positions 16 and 19 each coordinate Zn(2+). The segment covering Pro-28 to Gly-38 has biased composition (basic and acidic residues). Position 30 is an N6-methyllysine (Lys-30). Residue His-37 participates in Zn(2+) binding.

It depends on [3Fe-4S] cluster as a cofactor. Requires [4Fe-4S] cluster as cofactor. Zn(2+) serves as cofactor.

Ferredoxins are iron-sulfur proteins that transfer electrons in a wide variety of metabolic reactions. This Metallosphaera prunae protein is Zinc-containing ferredoxin (zfx).